Here is a 567-residue protein sequence, read N- to C-terminus: Ran-binding protein 3 (567 aa).

The span at 1–10 (MADLANEEKP) shows a compositional bias: basic and acidic residues. 3 disordered regions span residues 1 to 263 (MADL…FVFG), 332 to 373 (LSPP…AESA), and 515 to 567 (VEQE…TGST). Residue Ala-2 is modified to N-acetylalanine. 2 positions are modified to N6-acetyllysine: Lys-9 and Lys-21. A compositionally biased stretch (basic and acidic residues) spans 39-49 (EEPRGEAEAPH). Thr-75 is modified (phosphothreonine). Positions 75–89 (TPPPPAPEAQLPPFP) are enriched in pro residues. A phosphoserine mark is found at Ser-100, Ser-101, and Ser-108. Positions 117–125 (PPVKRERTS) match the Nuclear localization signal motif. Thr-124 carries the phosphothreonine modification. Composition is skewed to polar residues over residues 125–134 (SSLTQFPPSQ) and 184–197 (ALSQTVPSSGTNGV). Ser-126 is subject to Phosphoserine. A phosphoserine mark is found at Ser-219, Ser-333, Ser-353, Ser-355, and Ser-372. Low complexity predominate over residues 347–362 (ENAAAESGSESSSQEA). A RanBD1 domain is found at 378-518 (KATARKCLLE…LALRSRVEQE (141 aa)). The segment covering 534–544 (NEEDDSDDDDV) has biased composition (acidic residues). Ser-539 bears the Phosphoserine mark. Residues 549–567 (GATAAGAGDEGDGQTTGST) show a composition bias toward low complexity.

In terms of assembly, interacts with CHC1 in a Ran-stimulated manner. Interacts with XPO1. Interacts (via its C-terminal R domain) with SMAD2 (dephosphorylated form via its MH1 and MH2 domains); the interaction results in the nuclear export of SMAD2 and termination of the TGF-beta signaling. Interacts (via its C-terminal R domain) with SMAD3 (dephosphorylated form via its MH1 domain); the interaction results in the nuclear export of SMAD3 and termination of the TGF-beta signaling. Post-translationally, phosphorylation at Ser-126 promotes its import into the nucleus. Widely expressed with high levels in testis and heart.

The protein resides in the cytoplasm. It localises to the nucleus. In terms of biological role, acts as a cofactor for XPO1/CRM1-mediated nuclear export, perhaps as export complex scaffolding protein. Bound to XPO1/CRM1, stabilizes the XPO1/CRM1-cargo interaction. In the absence of Ran-bound GTP prevents binding of XPO1/CRM1 to the nuclear pore complex. Binds to CHC1/RCC1 and increases the guanine nucleotide exchange activity of CHC1/RCC1. Recruits XPO1/CRM1 to CHC1/RCC1 in a Ran-dependent manner. Negative regulator of TGF-beta signaling through interaction with the R-SMAD proteins, SMAD2 and SMAD3, and mediating their nuclear export. The sequence is that of Ran-binding protein 3 (RANBP3) from Homo sapiens (Human).